We begin with the raw amino-acid sequence, 303 residues long: Probable 5-dehydro-4-deoxyglucarate dehydratase (303 aa).

The protein belongs to the DapA family.

It carries out the reaction 5-dehydro-4-deoxy-D-glucarate + H(+) = 2,5-dioxopentanoate + CO2 + H2O. Its pathway is carbohydrate acid metabolism; D-glucarate degradation; 2,5-dioxopentanoate from D-glucarate: step 2/2. This is Probable 5-dehydro-4-deoxyglucarate dehydratase from Acidovorax ebreus (strain TPSY) (Diaphorobacter sp. (strain TPSY)).